Consider the following 138-residue polypeptide: Protein NrdI (138 aa).

It belongs to the NrdI family.

Functionally, probably involved in ribonucleotide reductase function. This is Protein NrdI from Beutenbergia cavernae (strain ATCC BAA-8 / DSM 12333 / CCUG 43141 / JCM 11478 / NBRC 16432 / NCIMB 13614 / HKI 0122).